The primary structure comprises 90 residues: Probable Fe(2+)-trafficking protein (90 aa).

Belongs to the Fe(2+)-trafficking protein family. In terms of assembly, monomer.

Could be a mediator in iron transactions between iron acquisition and iron-requiring processes, such as synthesis and/or repair of Fe-S clusters in biosynthetic enzymes. This is Probable Fe(2+)-trafficking protein from Enterobacter sp. (strain 638).